Consider the following 387-residue polypeptide: Cytochrome b (387 aa).

Transmembrane regions (helical) follow at residues phenylalanine 32–methionine 52, tryptophan 76–glycine 98, valine 113–valine 133, and phenylalanine 179–isoleucine 199. Histidine 82 and histidine 96 together coordinate heme b. The heme b site is built by histidine 183 and histidine 197. Histidine 202 contributes to the a ubiquinone binding site. 4 helical membrane passes run tyrosine 226 to phenylalanine 246, leucine 290 to aspartate 310, leucine 322 to alanine 342, and phenylalanine 349 to proline 369.

This sequence belongs to the cytochrome b family. Fungal cytochrome b-c1 complex contains 10 subunits; 3 respiratory subunits, 2 core proteins and 5 low-molecular weight proteins. Cytochrome b-c1 complex is a homodimer. Heme b serves as cofactor.

The protein resides in the mitochondrion inner membrane. Its function is as follows. Component of the ubiquinol-cytochrome c reductase complex (complex III or cytochrome b-c1 complex) that is part of the mitochondrial respiratory chain. The b-c1 complex mediates electron transfer from ubiquinol to cytochrome c. Contributes to the generation of a proton gradient across the mitochondrial membrane that is then used for ATP synthesis. This chain is Cytochrome b (COB), found in Podospora anserina (strain S / ATCC MYA-4624 / DSM 980 / FGSC 10383) (Pleurage anserina).